Reading from the N-terminus, the 150-residue chain is MNIILLDKIANLGGLGDQVTVKSGYARNFLFPQGKAVPATKDNVEKFEARRAELEAKIAEQLAAANARAEKVAELAEVTIAAPAGDEGKLFGSVGTRDIADAITAAGVEVQKAEVKLPTGTLRETGEYDIDLQLHSDVITSIKVIIIAEA.

The protein belongs to the bacterial ribosomal protein bL9 family.

Binds to the 23S rRNA. The polypeptide is Large ribosomal subunit protein bL9 (Alteromonas mediterranea (strain DSM 17117 / CIP 110805 / LMG 28347 / Deep ecotype)).